Consider the following 920-residue polypeptide: Isoleucine--tRNA ligase (920 aa).

Positions 58–68 (PYANGHLHLGH) match the 'HIGH' region motif. Glu569 contributes to the L-isoleucyl-5'-AMP binding site. The 'KMSKS' region signature appears at 610-614 (KMSKS). Lys613 provides a ligand contact to ATP. Positions 895, 898, 910, and 913 each coordinate Zn(2+).

The protein belongs to the class-I aminoacyl-tRNA synthetase family. IleS type 1 subfamily. As to quaternary structure, monomer. Zn(2+) is required as a cofactor.

It is found in the cytoplasm. The enzyme catalyses tRNA(Ile) + L-isoleucine + ATP = L-isoleucyl-tRNA(Ile) + AMP + diphosphate. Catalyzes the attachment of isoleucine to tRNA(Ile). As IleRS can inadvertently accommodate and process structurally similar amino acids such as valine, to avoid such errors it has two additional distinct tRNA(Ile)-dependent editing activities. One activity is designated as 'pretransfer' editing and involves the hydrolysis of activated Val-AMP. The other activity is designated 'posttransfer' editing and involves deacylation of mischarged Val-tRNA(Ile). In Helicobacter pylori (strain Shi470), this protein is Isoleucine--tRNA ligase.